Reading from the N-terminus, the 67-residue chain is Cell division protein ZapB (67 aa).

A coiled-coil region spans residues 3–59; the sequence is LELLSKLETKIQTALETIELLKMELEEEKQKSIGLAEQNQQLSQDLNSWNEKVTGLV.

The protein belongs to the ZapB family. In terms of assembly, homodimer. The ends of the coiled-coil dimer bind to each other, forming polymers. Interacts with FtsZ.

The protein localises to the cytoplasm. In terms of biological role, non-essential, abundant cell division factor that is required for proper Z-ring formation. It is recruited early to the divisome by direct interaction with FtsZ, stimulating Z-ring assembly and thereby promoting cell division earlier in the cell cycle. Its recruitment to the Z-ring requires functional FtsA or ZipA. In Shewanella woodyi (strain ATCC 51908 / MS32), this protein is Cell division protein ZapB.